The sequence spans 269 residues: 5'-nucleotidase SurE (269 aa).

A divalent metal cation is bound by residues D11, D12, S43, and N101.

Belongs to the SurE nucleotidase family. A divalent metal cation serves as cofactor.

The protein resides in the cytoplasm. The catalysed reaction is a ribonucleoside 5'-phosphate + H2O = a ribonucleoside + phosphate. Functionally, nucleotidase that shows phosphatase activity on nucleoside 5'-monophosphates. The protein is 5'-nucleotidase SurE of Prochlorococcus marinus (strain MIT 9313).